A 419-amino-acid polypeptide reads, in one-letter code: MDKLIITGGACLDGEIRISGAKNAALPILAATLLADGPVTVGNLPHLHDITTMIELFGRMGIEPVIDEKLAVEIDPRTIKTLVAPYELVKTMRASILVLGPMVARFGEAEVALPGGCAIGSRPVDLHIRGLEAMGAKIEVQGGYIKAKAPEGGLRGAHFFFDTVSVTGTENIMMAAALAKGRSVLQNAAREPEVVDLANFINAMGGKVQGAGTDTIVIDGVERLHSANYRVMPDRIETGTYLVAAAVTGGRVKVKDTDPTILEAVLEKLKEAGADINTGEDWIELDMHGKRPKAVNLRTAPYPAFPTDMQAQFISLNAIAEGTGAVIETIFENRFMHVYEMHRMGAQIQVEGNTAIVTGVKALKVPGNGHLRASASLVLSALVAEGDTLIDRIYHIDRGYECIEEKLQMLGAKIRRVPG.

22 to 23 contributes to the phosphoenolpyruvate binding site; that stretch reads KN. A UDP-N-acetyl-alpha-D-glucosamine-binding site is contributed by R93. C117 (proton donor) is an active-site residue. C117 is subject to 2-(S-cysteinyl)pyruvic acid O-phosphothioketal. Residues 122–126, D308, and I330 each bind UDP-N-acetyl-alpha-D-glucosamine; that span reads RPVDL.

This sequence belongs to the EPSP synthase family. MurA subfamily.

The protein resides in the cytoplasm. The catalysed reaction is phosphoenolpyruvate + UDP-N-acetyl-alpha-D-glucosamine = UDP-N-acetyl-3-O-(1-carboxyvinyl)-alpha-D-glucosamine + phosphate. Its pathway is cell wall biogenesis; peptidoglycan biosynthesis. Cell wall formation. Adds enolpyruvyl to UDP-N-acetylglucosamine. The sequence is that of UDP-N-acetylglucosamine 1-carboxyvinyltransferase from Pseudomonas putida (Arthrobacter siderocapsulatus).